Reading from the N-terminus, the 300-residue chain is MYLKGLYTALITPFTPTGQLDEEGLKKLIQIQLHHQVDGVVVLGTTGESPTLTQIEKRRIIEIALEEIQGRIKVIVGTGSYSTQQAIEQTLQAKQMGADAALIVTPYYNKPTQEGIFKHFEAINQAVSFPICLYNIQGRTGQNIQTHTLKRISTLSSIIGVKETSGDINQIMDVIEAFRQSHPNFAILSGDDALTLPMIALGGHGIISVVSNLVPAAMKSLVNAALNGNFKKARIIHNQLYSFIKAAFIETNPIPIKAALSLSKLPAGSCRLPLCDLSQNHSQKLAQILNELPQEWISHG.

T46 is a pyruvate binding site. Y134 serves as the catalytic Proton donor/acceptor. K162 serves as the catalytic Schiff-base intermediate with substrate. Residue I207 coordinates pyruvate.

The protein belongs to the DapA family. As to quaternary structure, homotetramer; dimer of dimers.

It is found in the cytoplasm. The enzyme catalyses L-aspartate 4-semialdehyde + pyruvate = (2S,4S)-4-hydroxy-2,3,4,5-tetrahydrodipicolinate + H2O + H(+). Its pathway is amino-acid biosynthesis; L-lysine biosynthesis via DAP pathway; (S)-tetrahydrodipicolinate from L-aspartate: step 3/4. Functionally, catalyzes the condensation of (S)-aspartate-beta-semialdehyde [(S)-ASA] and pyruvate to 4-hydroxy-tetrahydrodipicolinate (HTPA). The chain is 4-hydroxy-tetrahydrodipicolinate synthase from Protochlamydia amoebophila (strain UWE25).